Consider the following 153-residue polypeptide: Penitrem biosynthesis cluster 1 protein I (153 aa).

It participates in secondary metabolite biosynthesis. In terms of biological role, part of the gene cluster that mediates the biosynthesis of the indole diterpenes penitrems. The geranylgeranyl diphosphate (GGPP) synthase ptmG catalyzes the first step in penitrem biosynthesis via conversion of farnesyl pyrophosphate and isopentyl pyrophosphate into geranylgeranyl pyrophosphate (GGPP). Condensation of indole-3-glycerol phosphate with GGPP by the prenyl transferase ptmC then forms 3-geranylgeranylindole (3-GGI). Epoxidation by the FAD-dependent monooxygenase ptmM leads to a epoxidized-GGI that is substrate of the terpene cyclase ptmB for cyclization to yield paspaline. Paspaline is subsequently converted to 13-desoxypaxilline by the cytochrome P450 monooxygenase ptmP, the latter being then converted to paxilline by the cytochrome P450 monooxygenase ptmQ. Paxilline is converted to beta-paxitriol via C-10 ketoreduction by the short-chain dehydrogenase ptmH which can be monoprenylated at the C-20 by the indole diterpene prenyltransferase ptmD. A two-step elimination (acetylation and elimination) process performed by the O-acetyltransferase ptmV and ptmI leads to the production of the prenylated form of penijanthine. The FAD-linked oxidoreductase ptmO then converts the prenylated form of penijanthine into PC-M5 which is in turn transformed into PC-M4 by the aromatic dimethylallyltransferase ptmE. Five sequential oxidative transformations performed by the cytochrome P450 monooxygenases ptmK, ptmU, ptmL, ptmN and ptmJ yield the various penitrem compounds. PtmK, ptmU and ptmM are involved in the formation of the key bicyclic ring of penitrem C via the formation of the intermediates secopenitrem D and penitrem D. PtmL catalyzes the epoxidation of penitrem D and C to yield penitrem B and F, respectively. PtmJ catalyzes the last benzylic hydroxylation to convert penitrem B to prenitrem E and penitrem F to penitrem A. The polypeptide is Penitrem biosynthesis cluster 1 protein I (Penicillium ochrochloron).